A 536-amino-acid polypeptide reads, in one-letter code: 2,3-bisphosphoglycerate-independent phosphoglycerate mutase (536 aa).

Mn(2+)-binding residues include D19 and S69. S69 acts as the Phosphoserine intermediate in catalysis. Substrate is bound by residues H130, 160 to 161, R192, R198, 262 to 265, and K335; these read RD and RPDR. Mn(2+) contacts are provided by D402, H406, D443, H444, and H461.

It belongs to the BPG-independent phosphoglycerate mutase family. As to quaternary structure, monomer. Mn(2+) is required as a cofactor.

The catalysed reaction is (2R)-2-phosphoglycerate = (2R)-3-phosphoglycerate. It participates in carbohydrate degradation; glycolysis; pyruvate from D-glyceraldehyde 3-phosphate: step 3/5. In terms of biological role, catalyzes the interconversion of 2-phosphoglycerate and 3-phosphoglycerate. The polypeptide is 2,3-bisphosphoglycerate-independent phosphoglycerate mutase (Gloeobacter violaceus (strain ATCC 29082 / PCC 7421)).